Here is a 257-residue protein sequence, read N- to C-terminus: Large ribosomal subunit protein uL2 (257 aa).

Residues 210-231 are disordered; it reads PHGGGNHQHIGKASTVKRGTSA.

It belongs to the universal ribosomal protein uL2 family.

Its subcellular location is the cytoplasm. This is Large ribosomal subunit protein uL2 (RpL8) from Mamestra brassicae (Cabbage moth).